The chain runs to 181 residues: Disulfide bond formation protein B (181 aa).

Residues 1-13 (MLSVGQWPNKPFA) are Cytoplasmic-facing. The chain crosses the membrane as a helical span at residues 14–30 (WLLLFLGCSGLLGAALY). Residues 31 to 48 (FQMVLNLEPCVKCVYQRM) lie on the Periplasmic side of the membrane. A disulfide bridge connects residues cysteine 40 and cysteine 43. A helical membrane pass occupies residues 49 to 64 (AVIGIGLSAIVGLFGS). At 65–71 (GLWLTRW) the chain is on the cytoplasmic side. A helical membrane pass occupies residues 72–89 (AALIGWLYSSYQGLLIAY). Over 90–145 (DHWDLQTSKNAFFAVCESAPNFPDWAPMHEWMPGLFAAPGLCGDIDWQWLGLGMPG) the chain is Periplasmic. The cysteines at positions 105 and 131 are disulfide-linked. A helical transmembrane segment spans residues 146 to 164 (WMTVIFAGLLLIGIIVTIC). At 165 to 181 (HIISSFTKKDGLVLYHK) the chain is on the cytoplasmic side.

The protein belongs to the DsbB family.

It localises to the cell inner membrane. In terms of biological role, required for disulfide bond formation in some periplasmic proteins. Acts by oxidizing the DsbA protein. The chain is Disulfide bond formation protein B from Idiomarina loihiensis (strain ATCC BAA-735 / DSM 15497 / L2-TR).